A 217-amino-acid chain; its full sequence is Urease accessory protein UreG (217 aa).

Positions 1 to 18 (MNAPHHPAHSTVRTKKLP) are enriched in basic residues. Residues 1-24 (MNAPHHPAHSTVRTKKLPPLRVGV) are disordered. Position 26–33 (26–33 (GPVGSGKT)) interacts with GTP.

Belongs to the SIMIBI class G3E GTPase family. UreG subfamily. Homodimer. UreD, UreF and UreG form a complex that acts as a GTP-hydrolysis-dependent molecular chaperone, activating the urease apoprotein by helping to assemble the nickel containing metallocenter of UreC. The UreE protein probably delivers the nickel.

It localises to the cytoplasm. Its function is as follows. Facilitates the functional incorporation of the urease nickel metallocenter. This process requires GTP hydrolysis, probably effectuated by UreG. In Paraburkholderia xenovorans (strain LB400), this protein is Urease accessory protein UreG.